Reading from the N-terminus, the 510-residue chain is Serine carboxypeptidase 1 (510 aa).

The N-terminal stretch at 1 to 25 (MARRGRRSLASPAVAIALFVFLAYG) is a signal peptide. A propeptide spanning residues 26–36 (GGGGGGGVCEA) is cleaved from the precursor. 3 disulfide bridges follow: Cys98-Cys399, Cys262-Cys274, and Cys297-Cys366. N-linked (GlcNAc...) asparagine glycosylation is present at Asn154. Ser194 is an active-site residue. Asn268 carries N-linked (GlcNAc...) asparagine glycosylation. Residues 303–362 (IKKVTPANTKLPKSFQHLGTTTKPLAVRTRMHGRAWPLRAPVRAGRVPSWQEFARGSRPS) constitute a propeptide, linker peptide. N-linked (GlcNAc...) asparagine glycosylation is present at Asn418. Catalysis depends on residues Asp434 and His487. The Microbody targeting signal signature appears at 508–510 (SKL).

Belongs to the peptidase S10 family.

The catalysed reaction is Release of a C-terminal amino acid with broad specificity.. The polypeptide is Serine carboxypeptidase 1 (CBP1) (Oryza sativa subsp. japonica (Rice)).